The chain runs to 365 residues: Glycolaldehyde reductase (365 aa).

8 residues coordinate NAD(+): D37, G94, K95, T116, S119, S125, L127, and Y131. The Zn(2+) site is built by D171, H254, and H271.

The protein belongs to the iron-containing alcohol dehydrogenase family. The cofactor is Zn(2+).

It carries out the reaction ethylene glycol + NAD(+) = glycolaldehyde + NADH + H(+). With respect to regulation, is subject to substrate inhibition. Its function is as follows. Oxidoreductase involved in the non-carboxylating pentose bisphosphate pathway, a nucleoside degradation pathway present in some halophilic archaea. Catalyzes the reduction of glycolaldehyde to ethylene glycol. Cannot catalyze the oxidation of glycerol 1-phosphate nor the reduction of dihydroxyacetone phosphate (DHAP). This Halobacterium salinarum (strain ATCC 700922 / JCM 11081 / NRC-1) (Halobacterium halobium) protein is Glycolaldehyde reductase.